Here is a 2656-residue protein sequence, read N- to C-terminus: 1-phosphatidylinositol 3-phosphate 5-kinase (2656 aa).

The disordered stretch occupies residues 24–159 (FGTDDSQKDF…NSTNNDTSSN (136 aa)). Low complexity-rich tracts occupy residues 59-107 (NNNN…NNNN) and 124-159 (SNTT…TSSN). The FYVE-type zinc finger occupies 198-255 (DHSSAVCYECSEEFTTFKRRHHCRLCGQIFCWKCSQKTLTDGKGERVRVCNFCYRRYM). Cys-204, Cys-207, Cys-220, Cys-223, Cys-228, Cys-231, Cys-247, and Cys-250 together coordinate Zn(2+). A compositionally biased stretch (polar residues) spans 304-331 (NVSLGNSGDNSSFVQSPNNNFSQSPTFS). Disordered stretches follow at residues 304–383 (NVSL…NNQQ), 465–495 (DHHQ…SPIV), 517–570 (DNLD…SSSS), 618–657 (NNND…NTSF), 670–823 (TIGR…QQQP), 1115–1150 (SNSI…NNST), 1633–1659 (RSKR…QILI), 1710–1844 (VNNN…SSTP), 2031–2127 (QQQQ…SISP), 2179–2208 (NQQQ…SIIE), 2246–2304 (QQGD…SSNS), and 2617–2656 (NNNN…QINK). Positions 332–355 (QQQQQQQQQQQQQQQQQQQQQQQQ) are enriched in low complexity. Polar residues-rich tracts occupy residues 356–371 (TTGV…NSTL), 473–489 (SNSH…TPSG), and 542–557 (SHSS…TVST). Low complexity-rich tracts occupy residues 558-570 (GESN…SSSS), 618-637 (NNND…NNNN), 674-730 (NNNN…NLPN), 743-757 (QQQQ…QPQP), and 811-823 (PSSS…QQQP). Low complexity-rich tracts occupy residues 1639 to 1656 (QQQQ…PQPQ) and 1710 to 1746 (VNNN…NNNN). Coiled-coil stretches lie at residues 1741 to 1823 (NNNN…NNNN) and 2019 to 2061 (KRIS…QQEQ). Basic and acidic residues predominate over residues 1750-1798 (NKSENENENKNENKNENENENENKNENKNENENENKKENENQLEIKNEN). Low complexity-rich tracts occupy residues 1807-1833 (NNNN…IDNN), 2031-2061 (QQQQ…QQEQ), 2078-2107 (SPSS…SETN), and 2118-2127 (LSGSPISISP). The segment covering 2193–2202 (IDEKDDRNTE) has biased composition (basic and acidic residues). 2 stretches are compositionally biased toward low complexity: residues 2252–2283 (NNNN…NNNN) and 2618–2647 (NNNN…GNIN). In terms of domain architecture, PIPK spans 2275–2596 (NNNNTNNNNE…RFRDAMWLYF (322 aa)).

It localises to the endosome membrane. Its subcellular location is the early endosome membrane. It is found in the cytoplasmic vesicle. The protein localises to the phagosome membrane. The protein resides in the late endosome membrane. The enzyme catalyses a 1,2-diacyl-sn-glycero-3-phospho-(1D-myo-inositol-3-phosphate) + ATP = a 1,2-diacyl-sn-glycero-3-phospho-(1D-myo-inositol-3,5-bisphosphate) + ADP + H(+). It catalyses the reaction a 1,2-diacyl-sn-glycero-3-phospho-(1D-myo-inositol) + ATP = a 1,2-diacyl-sn-glycero-3-phospho-(1D-myo-inositol-5-phosphate) + ADP + H(+). The catalysed reaction is L-seryl-[protein] + ATP = O-phospho-L-seryl-[protein] + ADP + H(+). In terms of biological role, dual specificity kinase part of the PI(3,5)P2 regulatory complex which regulates both the synthesis and turnover of phosphatidylinositol 3,5-bisphosphate (PtdIns(3,5)P2). Catalyzes the phosphorylation of phosphatidylinositol 3-phosphate on the fifth hydroxyl of the myo-inositol ring, to form phosphatidylinositol 3,5-bisphosphate. This is 1-phosphatidylinositol 3-phosphate 5-kinase (pip5k3) from Dictyostelium discoideum (Social amoeba).